A 195-amino-acid chain; its full sequence is 3-isopropylmalate dehydratase small subunit (195 aa).

Belongs to the LeuD family. LeuD type 1 subfamily. In terms of assembly, heterodimer of LeuC and LeuD.

It carries out the reaction (2R,3S)-3-isopropylmalate = (2S)-2-isopropylmalate. The protein operates within amino-acid biosynthesis; L-leucine biosynthesis; L-leucine from 3-methyl-2-oxobutanoate: step 2/4. Its function is as follows. Catalyzes the isomerization between 2-isopropylmalate and 3-isopropylmalate, via the formation of 2-isopropylmaleate. The sequence is that of 3-isopropylmalate dehydratase small subunit from Karelsulcia muelleri (strain GWSS) (Sulcia muelleri).